The sequence spans 257 residues: Capsid protein (257 aa).

The short motif at 3 to 20 (KRNYDTAFSTPMSNVRRR) is the Bipartite nuclear localization signal element. The Nuclear localization signal signature appears at 41-55 (KRRRWTNRPMWRKPR). A zinc finger spans residues 69–86 (CEGPCKVQSFEAKHDISH). Positions 102–123 (ITHRVGKRFCVKSIWVTGKIWM) match the Nuclear export signal motif. The Bipartite nuclear localization signal signature appears at 201-248 (SKFYRVNNYVVYNHQEAAKYENHTENALLLYMACTHASNPVYATLKIR).

The protein belongs to the geminiviridae capsid protein family. Homomultimer. Binds to single-stranded and double-stranded viral DNA. Interacts (via nuclear localization signals) with host importin alpha-1a.

The protein resides in the virion. Its subcellular location is the host nucleus. Its function is as follows. Encapsidates the viral DNA into characteristic twinned ('geminate') particles. Binds the genomic viral ssDNA and shuttles it into and out of the cell nucleus. The CP of bipartite geminiviruses is not required for cell-to-cell or systemic movement. This Glycine max (Soybean) protein is Capsid protein.